A 169-amino-acid chain; its full sequence is Acetolactate synthase small subunit (169 aa).

One can recognise an ACT domain in the interval 8–85 (TLSVLVEDTP…KVVEQEADNS (78 aa)).

The protein belongs to the acetolactate synthase small subunit family. Dimer of large and small chains.

It catalyses the reaction 2 pyruvate + H(+) = (2S)-2-acetolactate + CO2. It functions in the pathway amino-acid biosynthesis; L-isoleucine biosynthesis; L-isoleucine from 2-oxobutanoate: step 1/4. It participates in amino-acid biosynthesis; L-valine biosynthesis; L-valine from pyruvate: step 1/4. In Mycobacterium leprae (strain TN), this protein is Acetolactate synthase small subunit (ilvH).